A 9159-amino-acid chain; its full sequence is Halomucin (9159 aa).

An N-terminal signal peptide occupies residues 1 to 30; the sequence is MSQTAKPIFAVVVALIVLISGVAFIGSVSA. C-type lectin domains are found at residues 644–776 and 929–1060; these read TTGN…YLVE and YDGH…VEYG. A compositionally biased stretch (polar residues) spans 1310-1332; the sequence is QPQTVNDPDAVSTRNNNVGSNGL. The disordered stretch occupies residues 1310–1351; sequence QPQTVNDPDAVSTRNNNVGSNGLDSKIEDDQNNGADGNPHGT. The tract at residues 1756–3380 is V-G-G-L motif-rich region; the sequence is VGGLIGESSG…GFNGEHVGGL (1625 aa). Disordered stretches follow at residues 3484–3514, 4878–4912, 6570–6589, 7047–7097, 7660–7702, 7888–7923, 8212–8237, and 8369–8614; these read GATA…PAPQ, ESYW…TTPA, TDSA…SSGQ, TPTV…GINT, ATDS…NPGG, IDGD…EPAL, STQQ…GAAD, and DSTA…GSST. Residues 3495–3505 are compositionally biased toward gly residues; that stretch reads GTPGGATGYGS. Positions 4880–4890 are enriched in basic and acidic residues; that stretch reads YWDKGATDKSD. 2 stretches are compositionally biased toward polar residues: residues 7048-7057 and 7068-7078; these read PTVTINSSSD and GEDSTSSNESS. The segment covering 7079–7092 has biased composition (acidic residues); it reads DGTESDQGDPEDDI. The span at 7681 to 7698 shows a compositional bias: polar residues; the sequence is VTGSTPTFVSSGTVTTPE. A Cadherin domain is found at 7686-7793; that stretch reads PTFVSSGTVT…ITDVDEQPTG (108 aa). Acidic residues-rich tracts occupy residues 7888 to 7898 and 7905 to 7920; these read IDGDGLADDNE and DNDD…EDQE. The span at 8378–8390 shows a compositional bias: acidic residues; that stretch reads ALEDDSSNQDSGD. 2 stretches are compositionally biased toward low complexity: residues 8391–8529 and 8538–8548; these read DSSN…SSQN and SAAAVGAESGS. Gly residues-rich tracts occupy residues 8549-8566 and 8574-8608; these read EMGG…GDGS and AGGG…GSSS.

Probably glycosylated with sugar containing sialic acid. This may further contribute to its overall negative charge, thereby creating an aqueous shield covering the cells.

The protein resides in the secreted. Functionally, may protect the organism from desiccation stress. May also contribute to the rigidity and maintenance of the unique square cell morphology of H.walsbyi. This Haloquadratum walsbyi (strain DSM 16790 / HBSQ001) protein is Halomucin (hmu).